The sequence spans 474 residues: Glutathione synthetase (474 aa).

Residue Ala-2 is modified to N-acetylalanine. Arg-125 provides a ligand contact to substrate. Glu-144 contributes to the ATP binding site. 2 residues coordinate Mg(2+): Glu-144 and Asn-146. Residues 148–151 (ISAS), 214–216 (ERN), Gln-220, and 267–270 (RDGY) contribute to the substrate site. Residues Lys-305, 364-373 (KPQREGGGNN), Tyr-375, and 398-401 (MEKI) each bind ATP. Mg(2+) is bound at residue Glu-368. The residue at position 415 (Ser-415) is a Phosphoserine. Glu-425 provides a ligand contact to ATP. Residue Arg-450 coordinates substrate. ATP contacts are provided by Lys-452 and Asp-458. Residue 461–462 (VA) participates in substrate binding.

It belongs to the eukaryotic GSH synthase family. Homodimer. It depends on Mg(2+) as a cofactor.

The catalysed reaction is gamma-L-glutamyl-L-cysteine + glycine + ATP = glutathione + ADP + phosphate + H(+). It carries out the reaction gamma-L-glutamyl-(2S)-2-aminobutanoate + glycine + ATP = ophthalmate + ADP + phosphate + H(+). The protein operates within sulfur metabolism; glutathione biosynthesis; glutathione from L-cysteine and L-glutamate: step 2/2. Its function is as follows. Catalyzes the production of glutathione from gamma-glutamylcysteine and glycine in an ATP-dependent manner. Glutathione (gamma-glutamylcysteinylglycine, GSH) is the most abundant intracellular thiol in living aerobic cells and is required for numerous processes including the protection of cells against oxidative damage, amino acid transport, the detoxification of foreign compounds, the maintenance of protein sulfhydryl groups in a reduced state and acts as a cofactor for a number of enzymes. Participates in ophthalmate biosynthesis in hepatocytes. The protein is Glutathione synthetase of Rattus norvegicus (Rat).